The chain runs to 376 residues: Ribonucleoside-diphosphate reductase subunit beta (376 aa).

Residues Asp85, Glu116, and His119 each contribute to the Fe cation site. Tyr123 is a catalytic residue. Fe cation contacts are provided by Glu205, Glu239, and His242.

This sequence belongs to the ribonucleoside diphosphate reductase small chain family. As to quaternary structure, tetramer of two alpha and two beta subunits. It depends on Fe cation as a cofactor.

It catalyses the reaction a 2'-deoxyribonucleoside 5'-diphosphate + [thioredoxin]-disulfide + H2O = a ribonucleoside 5'-diphosphate + [thioredoxin]-dithiol. Provides the precursors necessary for DNA synthesis. Catalyzes the biosynthesis of deoxyribonucleotides from the corresponding ribonucleotides. This chain is Ribonucleoside-diphosphate reductase subunit beta (nrdB), found in Buchnera aphidicola subsp. Acyrthosiphon pisum (strain APS) (Acyrthosiphon pisum symbiotic bacterium).